A 459-amino-acid chain; its full sequence is Ribulose bisphosphate carboxylase large chain (459 aa).

K4 bears the N6,N6,N6-trimethyllysine mark. The substrate site is built by N113 and T163. K165 functions as the Proton acceptor in the catalytic mechanism. K167 contacts substrate. Mg(2+)-binding residues include K191, D193, and E194. An N6-carboxylysine modification is found at K191. The active-site Proton acceptor is the H284. R285, H317, and S369 together coordinate substrate.

Belongs to the RuBisCO large chain family. Type I subfamily. In terms of assembly, heterohexadecamer of 8 large chains and 8 small chains; disulfide-linked. The disulfide link is formed within the large subunit homodimers. Requires Mg(2+) as cofactor. Post-translationally, the disulfide bond which can form in the large chain dimeric partners within the hexadecamer appears to be associated with oxidative stress and protein turnover.

It is found in the plastid. The protein localises to the chloroplast. The enzyme catalyses 2 (2R)-3-phosphoglycerate + 2 H(+) = D-ribulose 1,5-bisphosphate + CO2 + H2O. It carries out the reaction D-ribulose 1,5-bisphosphate + O2 = 2-phosphoglycolate + (2R)-3-phosphoglycerate + 2 H(+). Functionally, ruBisCO catalyzes two reactions: the carboxylation of D-ribulose 1,5-bisphosphate, the primary event in carbon dioxide fixation, as well as the oxidative fragmentation of the pentose substrate in the photorespiration process. Both reactions occur simultaneously and in competition at the same active site. This chain is Ribulose bisphosphate carboxylase large chain, found in Apium graveolens (Celery).